The chain runs to 114 residues: ATP synthase subunit c (114 aa).

Helical transmembrane passes span 31-51 and 88-108; these read AVFYGALAIGAGVAIGAAAGG and IETFVLYALLIAIIFIFTGIF.

This sequence belongs to the ATPase C chain family. In terms of assembly, F-type ATPases have 2 components, F(1) - the catalytic core - and F(0) - the membrane proton channel. F(1) has five subunits: alpha(3), beta(3), gamma(1), delta(1), epsilon(1). F(0) has three main subunits: a(1), b(2) and c(10-14). The alpha and beta chains form an alternating ring which encloses part of the gamma chain. F(1) is attached to F(0) by a central stalk formed by the gamma and epsilon chains, while a peripheral stalk is formed by the delta and b chains.

It localises to the cell inner membrane. F(1)F(0) ATP synthase produces ATP from ADP in the presence of a proton or sodium gradient. F-type ATPases consist of two structural domains, F(1) containing the extramembraneous catalytic core and F(0) containing the membrane proton channel, linked together by a central stalk and a peripheral stalk. During catalysis, ATP synthesis in the catalytic domain of F(1) is coupled via a rotary mechanism of the central stalk subunits to proton translocation. Its function is as follows. Key component of the F(0) channel; it plays a direct role in translocation across the membrane. A homomeric c-ring of between 10-14 subunits forms the central stalk rotor element with the F(1) delta and epsilon subunits. The protein is ATP synthase subunit c of Sulfurihydrogenibium sp. (strain YO3AOP1).